The sequence spans 237 residues: MQKKAELYRGKAKTVYTTDDPDLLVLEFRNDTSALDGERIEQFDRKGMVNNKFNHFIMSKLAEAGIPTQMERLLSDTEVLVKKLDMVPVECVVRNRAAGSLVRRLGIEEGLVLNPPLFDLFLKNDAKHDPMVNESYCETFGWVSKEHLAEMKELSLKANEVLSKLFDDAGLILVDFKLEFGLFKGQIVLGDEFSPDGSRLWDKETLDKMDKDRFRQSLGGLIEAYEEVARRIGVILD.

It belongs to the SAICAR synthetase family.

It catalyses the reaction 5-amino-1-(5-phospho-D-ribosyl)imidazole-4-carboxylate + L-aspartate + ATP = (2S)-2-[5-amino-1-(5-phospho-beta-D-ribosyl)imidazole-4-carboxamido]succinate + ADP + phosphate + 2 H(+). It functions in the pathway purine metabolism; IMP biosynthesis via de novo pathway; 5-amino-1-(5-phospho-D-ribosyl)imidazole-4-carboxamide from 5-amino-1-(5-phospho-D-ribosyl)imidazole-4-carboxylate: step 1/2. The chain is Phosphoribosylaminoimidazole-succinocarboxamide synthase from Photorhabdus laumondii subsp. laumondii (strain DSM 15139 / CIP 105565 / TT01) (Photorhabdus luminescens subsp. laumondii).